The following is a 770-amino-acid chain: Signal transducer and activator of transcription 3 (770 aa).

Position 2 is an N-acetylalanine (Ala2). Residues Lys49 and Lys87 each carry the N6-acetyllysine modification. Positions 150-162 (DVRKRVQDLEQKM) match the Essential for nuclear import motif. The region spanning 580–670 (WNEGYIMGFI…DATNILVSPL (91 aa)) is the SH2 domain. Allysine; alternate is present on residues Lys601, Lys615, and Lys631. An N6-acetyllysine; alternate mark is found at Lys601, Lys615, and Lys631. Tyr640 is subject to Phosphotyrosine; by TYK2. An Allysine; alternate modification is found at Lys685. Position 685 is an N6-acetyllysine; alternate (Lys685). The residue at position 705 (Tyr705) is a Phosphotyrosine; by FER and PTK6. Lys707 carries the N6-acetyllysine modification. Phosphothreonine is present on Thr714. Ser727 carries the phosphoserine; by DYRK2, NLK, NEK6, IRAK1, RPS6KA5, ZIPK/DAPK3 and PKC/PRKCE modification.

It belongs to the transcription factor STAT family. Forms a homodimer or a heterodimer with a related family member (at least STAT1). Component of a promoter-binding complex composed of STAT3, NFATC3 and NFATC4; complex formation is enhanced by calcineurin. Interacts with IL31RA, NCOA1, PELP1, SIPAR, SOCS7, STATIP1 and TMF1. Interacts with IL23R in presence of IL23. Interacts (via SH2 domain) with NLK. Interacts with ARL2BP; the interaction is enhanced by LIF and JAK1 expression. Interacts with KPNA4 and KPNA5; KPNA4 may be the primary mediator of nuclear import. Interacts with CAV2; the interaction is increased on insulin-induced tyrosine phosphorylation of CAV2 and leads to STAT3 activation. Interacts with ARL2BP; interaction is enhanced with ARL2. Interacts with NEK6. Binds to CDK9 when activated and nuclear. Interacts with BMX. Interacts with ZIPK/DAPK3. Interacts with PIAS3; the interaction occurs on stimulation by IL6, CNTF or OSM and inhibits the DNA binding activity of STAT3. In prostate cancer cells, interacts with PRKCE and promotes DNA binding activity of STAT3. Interacts with STMN3, antagonizing its microtubule-destabilizing activity. Interacts with the 'Lys-129' acetylated form of BIRC5/survivin. Interacts with FER. Interacts (via SH2 domain) with EIF2AK2/PKR (via the kinase catalytic domain). Interacts with FGFR4. Interacts with INPP5F; the interaction is independent of STAT3 Tyr-705 phosphorylation status. Interacts with OCIAD1 and OCIAD2. Interacts (unphosphorylated or phosphorylated at Ser-727) with PHB1. Interacts and may form heterodimers with NHLH1. Found in a complex with SLC39A6, SLC39A10 and with the 'Ser-727' phosphorylated form of STAT3 throughout mitosis. Interacts (when acetylated) with EP300 (via bromo domain); interaction takes place following STAT3 acetylation by EP300 and promotes enhanceosome assembly. Interacts (when acetylated) with BRD2 (via bromo domain); interaction promotes STAT3 recruitment to chromatin and T-helper Th17 cell differentiation. Interacts with FAM220A/SIPAR; the interaction occurs in both the nucleus and the cytoplasm, is enhanced by IL6 and promotes STAT3 dephosphorylation. Interacts in both unphosphorylated and phosphorylated forms with FAM220A but interacts preferentially in the phosphorylated form in the nucleus. Interacts with PTPN2; the interaction is promoted by FAM220A and leads to STAT3 dephosphorylation which negatively regulates STAT3 transcriptional activator activity. In terms of processing, activated through tyrosine phosphorylation by BMX. Tyrosine phosphorylated in response to IL-6, IL-11, CNTF, LIF, CSF-1, EGF, PDGF, IFN-alpha and OSM. Tyrosine phosphorylated in response to constitutively activated FGFR1, FGFR2, FGFR3 and FGFR4. Phosphorylated on serine upon DNA damage, probably by ATM or ATR. Serine phosphorylation is important for the formation of stable DNA-binding STAT3 homodimers and maximal transcriptional activity. ARL2BP may participate in keeping the phosphorylated state of STAT3 within the nucleus. Tyrosine phosphorylated upon stimulation with EGF. Upon LPS challenge, phosphorylated within the nucleus by IRAK1. Phosphorylated on Ser-727 by RPS6KA5. Dephosphorylation on tyrosine residues by PTPN2 negatively regulates IL6/interleukin-6 signaling. Phosphorylation at Tyr-705 by FER, isoform M2 of PKM (PKM2) or PTK6 leads to an increase of its transcriptional activity. Phosphorylation at Tyr-705 is increased in the presence of calcineurin. Phosphorylation at Tyr-640 by TYK2 negatively regulates transcriptional activity. Post-translationally, acetylated on lysine residues by EP300/p300, promoting its activation. Acetylation at Lys-49 and Lys-87 by EP300/p300 promotes its activation. Acetylation at Lys-87 by EP300/p300 promotes its association with BRD2 and recruitment to chromatin. Deacetylated at Lys-49 and Lys-87 by HDAC1. Acetylation at Lys-685 by EP300/p300 promotes its homodimerization and activation. Deacetylated at Lys-685 by HDAC3. Acetylated on lysine residues by CREBBP. Deacetylation by LOXL3 leads to disrupt STAT3 dimerization and inhibit STAT3 transcription activity. Oxidation of lysine residues to allysine on STAT3 preferentially takes place on lysine residues that are acetylated. Some lysine residues are oxidized to allysine by LOXL3, leading to disrupt STAT3 dimerization and inhibit STAT3 transcription activity. Oxidation of lysine residues to allysine on STAT3 preferentially takes place on lysine residues that are acetylated.

Its subcellular location is the cytoplasm. It localises to the nucleus. Functionally, signal transducer and transcription activator that mediates cellular responses to interleukins, KITLG/SCF, LEP and other growth factors. Once activated, recruits coactivators, such as NCOA1 or MED1, to the promoter region of the target gene. May mediate cellular responses to activated FGFR1, FGFR2, FGFR3 and FGFR4. Upon activation of IL6ST/gp130 signaling by interleukin-6 (IL6), binds to the IL6-responsive elements identified in the promoters of various acute-phase protein genes. Activated by IL31 through IL31RA. Acts as a regulator of inflammatory response by regulating differentiation of naive CD4(+) T-cells into T-helper Th17 or regulatory T-cells (Treg): acetylation promotes its transcription activity and cell differentiation while deacetylation and oxidation of lysine residues by LOXL3 inhibits differentiation. Involved in cell cycle regulation by inducing the expression of key genes for the progression from G1 to S phase, such as CCND1. Mediates the effects of LEP on melanocortin production, body energy homeostasis and lactation. May play an apoptotic role by transctivating BIRC5 expression under LEP activation. Cytoplasmic STAT3 represses macroautophagy by inhibiting EIF2AK2/PKR activity. Plays a crucial role in basal beta cell functions, such as regulation of insulin secretion. Following JAK/STAT signaling activation and as part of a complex with NFATC3 and NFATC4, binds to the alpha-beta E4 promoter region of CRYAB and activates transcription in cardiomyocytes. Plays an important role in host defense in methicillin-resistant S.aureus lung infection by regulating the expression of the antimicrobial lectin REG3G. This chain is Signal transducer and activator of transcription 3 (STAT3), found in Bos taurus (Bovine).